Reading from the N-terminus, the 473-residue chain is Chromosomal replication initiator protein DnaA (473 aa).

A domain I, interacts with DnaA modulators region spans residues 1–90 (MSSSLWLQCL…KRVTAPKSET (90 aa)). A domain II region spans residues 91-136 (IAPARTRTAADVAAESSAPAQLQARKPVHNIWRDEEPVAVDLNHRS). The interval 137-353 (NVNPKHKFNN…GALNRVIANA (217 aa)) is domain III, AAA+ region. Positions 181, 183, 184, and 185 each coordinate ATP. Positions 354-473 (NFTGRPITID…YSNLIRTLSS (120 aa)) are domain IV, binds dsDNA.

The protein belongs to the DnaA family. In terms of assembly, oligomerizes as a right-handed, spiral filament on DNA at oriC.

The protein resides in the cytoplasm. Functionally, plays an essential role in the initiation and regulation of chromosomal replication. ATP-DnaA binds to the origin of replication (oriC) to initiate formation of the DNA replication initiation complex once per cell cycle. Binds the DnaA box (a 9 base pair repeat at the origin) and separates the double-stranded (ds)DNA. Forms a right-handed helical filament on oriC DNA; dsDNA binds to the exterior of the filament while single-stranded (ss)DNA is stabiized in the filament's interior. The ATP-DnaA-oriC complex binds and stabilizes one strand of the AT-rich DNA unwinding element (DUE), permitting loading of DNA polymerase. After initiation quickly degrades to an ADP-DnaA complex that is not apt for DNA replication. Binds acidic phospholipids. The protein is Chromosomal replication initiator protein DnaA of Vibrio atlanticus (strain LGP32) (Vibrio splendidus (strain Mel32)).